A 301-amino-acid chain; its full sequence is Oxaloacetate tautomerase YisK (301 aa).

Lysine 99 lines the oxalate pocket. Mn(2+) contacts are provided by glutamate 148, glutamate 150, and aspartate 179. Residues lysine 196 and threonine 266 each contribute to the oxalate site.

It belongs to the FAH family. Homodimer. It depends on Mg(2+) as a cofactor. Requires Mn(2+) as cofactor.

It is found in the cytoplasm. The catalysed reaction is oxaloacetate = enol-oxaloacetate. It carries out the reaction oxaloacetate + H(+) = pyruvate + CO2. Tautomerase that converts enol-oxaloacetate to the keto form of oxaloacetate. Also shows weak oxaloacetate decarboxylase (ODx), catalyzing the decarboxylation of oxaloacetate (OAA) to pyruvate and CO(2). This is Oxaloacetate tautomerase YisK from Bacillus subtilis (strain 168).